The chain runs to 308 residues: Alpha/beta hydrolase domain-containing protein WAV2 (308 aa).

The chain crosses the membrane as a helical span at residues 6 to 26 (SALFYGFGGIVVAGVALLVAF). Residues serine 159, aspartate 243, and arginine 308 each act as charge relay system in the active site.

The protein belongs to the serine esterase family. Expressed in roots, rosette leaves, stems and flowers.

It localises to the cell membrane. In terms of biological role, involved in the regulation of root growth. Involved in the suppression of the root bending in response to touch stimuli, gravity and light. Negatively regulates stimulus-induced root bending through inhibition of root tip rotation. The protein is Alpha/beta hydrolase domain-containing protein WAV2 of Arabidopsis thaliana (Mouse-ear cress).